A 287-amino-acid polypeptide reads, in one-letter code: Transmembrane protein 163 (287 aa).

Positions 1-63 (METAAGSERR…ESGQFSDGLE (63 aa)) are disordered. The Cytoplasmic segment spans residues 1–86 (METAAGSERR…HEAQNYRKKA (86 aa)). Phosphoserine occurs at positions 11, 53, 55, and 59. The required for interaction with MCOLN1 stretch occupies residues 40 to 70 (EPPQPEEERQLRISESGQFSDGLEDRGLLES). The chain crosses the membrane as a helical span at residues 87-107 (LWVSWFSIIVTLALAVAAFTV). The Extracellular segment spans residues 108–114 (SVMRYSA). A helical transmembrane segment spans residues 115 to 135 (SAFGFAFDAILDVLSSAIVLW). Residues 136–148 (RYSNAAAVHSAHR) lie on the Cytoplasmic side of the membrane. A helical transmembrane segment spans residues 149 to 169 (EYIACVILGVIFLLSSVCIVV). At 170–185 (KAIHDLSTKLLPEVDD) the chain is on the extracellular side. A helical membrane pass occupies residues 186–206 (FLFSVSILSGILCSILAVLKF). Residues 207-215 (MLGKVLTSR) are Cytoplasmic-facing. Residues 216–236 (ALITDGFNSLVGGVMGFSILL) form a helical membrane-spanning segment. Over 237-253 (SAEVFKHNSAVWYLDGS) the chain is Extracellular. A helical transmembrane segment spans residues 254–274 (IGVLIGLTIFAYGVKLLIDMV). At 275-287 (PRVRQTRHYEMFE) the chain is on the cytoplasmic side.

It belongs to the TMEM163 family. As to quaternary structure, homodimer. Interacts with MCOLN1/TRPML1. Interacts with SLC30A1, SLC30A2, SLC30A3 and SLC30A4.

It is found in the cytoplasmic vesicle. It localises to the secretory vesicle. The protein resides in the synaptic vesicle membrane. Its subcellular location is the early endosome membrane. The protein localises to the late endosome membrane. It is found in the lysosome membrane. It localises to the cell membrane. It catalyses the reaction Zn(2+)(in) = Zn(2+)(out). In terms of biological role, zinc ion transporter that mediates zinc efflux and plays a crucial role in intracellular zinc homeostasis. Binds the divalent cations Zn(2+), Ni(2+), and to a minor extent Cu(2+). Is a functional modulator of P2X purinoceptors, including P2RX1, P2RX3, P2RX4 and P2RX7. Plays a role in central nervous system development and is required for myelination, and survival and proliferation of oligodendrocytes. This is Transmembrane protein 163 (TMEM163) from Bos taurus (Bovine).